The sequence spans 201 residues: Ras-related protein Rab-1B (201 aa).

Position 1 is an N-acetylmethionine (M1). GTP contacts are provided by S17, G18, V19, G20, K21, S22, C23, Y33, T34, E35, S36, S39, and T40. S22 contacts Mg(2+). The Switch 1 signature appears at 30–45 (DDTYTESYISTIGVDF). 2 residues coordinate Mg(2+): T40 and D63. A switch 2 region; required for interaction with REP1/CHM region spans residues 64–83 (TAGQERFRTITSSYYRGAHG). The Switch 2 motif lies at 65 to 80 (AGQERFRTITSSYYRG). Residue G66 participates in GTP binding. A (Microbial infection) O-(2-cholinephosphoryl)serine modification is found at S76. Y77 is subject to (Microbial infection) O-AMP-tyrosine. Residues N121, K122, D124, S151, A152, and K153 each contribute to the GTP site. Residues 174-201 (GPGAASGGERPNLKIDSTPVKPAGGGCC) form a disordered region. S-geranylgeranyl cysteine attachment occurs at residues C200 and C201. C201 is modified (cysteine methyl ester).

Belongs to the small GTPase superfamily. Rab family. As to quaternary structure, interacts with MICAL1 and MICAL2. Interacts (in GTP-bound form) with MICALCL, MICAL1 and MILCAL3. Interacts with GDI1; the interaction requires the GDP-bound state. Interacts with CHM/REP1; the interaction requires the GDP-bound form and is necessary for prenylation by GGTase II. Interacts with RabGAP TBC1D20. Interacts (in GDP-bound form) with lipid phosphatase MTMR6 (via GRAM domain); the interaction regulates MTMR6 recruitment to the endoplasmic reticulum-Golgi intermediate compartment. Interacts (in GDP-bound form) with lipid phosphatase MTMR7. In terms of assembly, (Microbial infection) Interacts with L.pneumophila AnkX. Interacts with L.pneumophila Lem3. Interacts with L.pneumophila SidD. Interacts with L.pneumophila DrrA. It depends on Mg(2+) as a cofactor. In terms of processing, prenylated; by GGTase II, only after interaction of the substrate with Rab escort protein 1 (REP1). Post-translationally, (Microbial infection) AMPylation at Tyr-77 by L.pneumophila DrrA occurs in the switch 2 region and leads to moderate inactivation of the GTPase activity. It appears to prolong the lifetime of the GTP state of RAB1B by restricting access of GTPase effectors to switch 2 and blocking effector-stimulated GTP hydrolysis, thereby rendering RAB1B constitutively active. It is later de-AMPylated by L.pneumophila SidD, releasing RAB1B from bacterial phagosomes. (Microbial infection) Phosphocholinated at Ser-76 by L.pneumophila AnkX, leading to displace GDP dissociation inhibitors (GDI). Both GDP-bound and GTP-bound forms can be phosphocholinated. Dephosphocholinated by L.pneumophila Lem3, restoring accessibility to L.pneumophila GTPase effector LepB. In terms of processing, (Microbial infection) Glycosylated by S.typhimurium protein Ssek3: arginine GlcNAcylation prevents GTPase activity, thereby disrupting vesicular protein transport from the endoplasmic reticulum (ER) to the Golgi compartment.

It is found in the cytoplasm. The protein resides in the membrane. The protein localises to the preautophagosomal structure membrane. Its subcellular location is the perinuclear region. The catalysed reaction is GTP + H2O = GDP + phosphate + H(+). With respect to regulation, regulated by guanine nucleotide exchange factors (GEFs) which promote the exchange of bound GDP for free GTP. Regulated by GTPase activating proteins (GAPs) including TBC1D20 which increases the GTP hydrolysis activity. Inhibited by GDP dissociation inhibitors (GDIs). Its function is as follows. The small GTPases Rab are key regulators of intracellular membrane trafficking, from the formation of transport vesicles to their fusion with membranes. Rabs cycle between an inactive GDP-bound form and an active GTP-bound form that is able to recruit to membranes different set of downstream effectors directly responsible for vesicle formation, movement, tethering and fusion. Plays a role in the initial events of the autophagic vacuole development which take place at specialized regions of the endoplasmic reticulum. Regulates vesicular transport between the endoplasmic reticulum and successive Golgi compartments. Required to modulate the compacted morphology of the Golgi. Promotes the recruitment of lipid phosphatase MTMR6 to the endoplasmic reticulum-Golgi intermediate compartment. In Homo sapiens (Human), this protein is Ras-related protein Rab-1B.